The chain runs to 35 residues: LAGGLTEPRPADTEIQEIANKVKPQLEEKTNKKYD.

The disordered stretch occupies residues 1 to 35 (LAGGLTEPRPADTEIQEIANKVKPQLEEKTNKKYD). The span at 24–35 (PQLEEKTNKKYD) shows a compositional bias: basic and acidic residues.

This sequence belongs to the cystatin family.

It is found in the cytoplasm. In terms of biological role, potent inhibitor of cathepsins L and S, and papain. The protein is Leukocyte cysteine proteinase inhibitor 2 of Sus scrofa (Pig).